The sequence spans 106 residues: Phosphoribosyl-ATP pyrophosphatase (106 aa).

Belongs to the PRA-PH family.

It is found in the cytoplasm. It catalyses the reaction 1-(5-phospho-beta-D-ribosyl)-ATP + H2O = 1-(5-phospho-beta-D-ribosyl)-5'-AMP + diphosphate + H(+). It participates in amino-acid biosynthesis; L-histidine biosynthesis; L-histidine from 5-phospho-alpha-D-ribose 1-diphosphate: step 2/9. The polypeptide is Phosphoribosyl-ATP pyrophosphatase (Limosilactobacillus fermentum (strain NBRC 3956 / LMG 18251) (Lactobacillus fermentum)).